A 97-amino-acid polypeptide reads, in one-letter code: Transcription and mRNA export factor SUS1 (97 aa).

It belongs to the ENY2 family. As to quaternary structure, component of the nuclear pore complex (NPC)-associated TREX-2 complex (transcription and export complex 2), composed of at least SUS1, SAC3, THP1, SEM1, and CDC31. TREX-2 contains 2 SUS1 chains. The TREX-2 complex interacts with the nucleoporin NUP1. Component of the 1.8 MDa SAGA transcription coactivator-HAT complex. SAGA is built of 5 distinct domains with specialized functions. Within the SAGA complex, SUS1, SGF11, SGF73 and UBP8 form an additional subcomplex of SAGA called the DUB module (deubiquitination module). Interacts directly with THP1, SAC3, SGF11, and with the RNA polymerase II.

The protein resides in the nucleus. The protein localises to the nucleoplasm. Its subcellular location is the cytoplasm. It localises to the P-body. Its function is as follows. Involved in mRNA export coupled transcription activation by association with both the TREX-2 and the SAGA complexes. At the promoters, SAGA is required for recruitment of the basal transcription machinery. It influences RNA polymerase II transcriptional activity through different activities such as TBP interaction and promoter selectivity, interaction with transcription activators, and chromatin modification through histone acetylation and deubiquitination. Within the SAGA complex, participates in a subcomplex required for deubiquitination of H2B and for the maintenance of steady-state H3 methylation levels. The TREX-2 complex functions in docking export-competent ribonucleoprotein particles (mRNPs) to the nuclear entrance of the nuclear pore complex (nuclear basket). TREX-2 participates in mRNA export and accurate chromatin positioning in the nucleus by tethering genes to the nuclear periphery. May also be involved in cytoplasmic mRNA decay by interaction with components of P-bodies. The chain is Transcription and mRNA export factor SUS1 from Meyerozyma guilliermondii (strain ATCC 6260 / CBS 566 / DSM 6381 / JCM 1539 / NBRC 10279 / NRRL Y-324) (Yeast).